The chain runs to 169 residues: CRISPR system Cmr subunit Cmr5 (169 aa).

This sequence belongs to the CRISPR system Cmr5 family. As to quaternary structure, monomer in isolation. Part of the type III-B Cmr ribonucleoprotein (RNP) complex, an elongated RNP with Cmr2 and Cmr3 as the base, with Cmr4 and Cmr5 forming a helical core along the mature crRNA (39 or 45 nt in length), while the complex is capped by Cmr6 and Cmr1. The 5' end of the crRNA is bound to Cmr2 and Cmr3, while Cmr6 and a Cmr1 subunit (Cmr1-1 or Cmr1-2) cap the 3' end of the crRNA. The target RNA lies antiparallel to the crRNA, with its 5' end near Cmr1 and Cmr6 and its 3' end near Cmr2 and Cmr3; major target cleavage occurs nears the junction of Cmr1/Cmr6 and Cmr4/Cmr, with minor cleavage occurring at 6 nt intervals which coincide with the proposed spacing of Cmr4 subunits. Interacts with Cmr4. Interacts with Cmr2, Cmr4 and Cmr6.

The protein localises to the cytoplasm. Functionally, CRISPR (clustered regularly interspaced short palindromic repeat), is an adaptive immune system that provides protection against mobile genetic elements (viruses, transposable elements and conjugative plasmids). CRISPR clusters contain sequences complementary to antecedent mobile elements and target invading nucleic acids. CRISPR clusters are transcribed and processed into CRISPR RNA (crRNA), formerly called psiRNA (prokaryotic silencing) in this organism. Part of the Cmr ribonucleoprotein complex which has divalent cation-dependent endoribonuclease activity specific for ssRNA complementary to the crRNA (target NRA), generating 5' hydroxy- and 3' phosphate or 2'-3' cyclic phosphate termini. Cmr4 is probably the subunit that cleaves target RNA. Cmr complex does not cleave ssDNA complementary to the crRNA. Cleavage of invading RNA is guided by the crRNA; substrate cleavage occurs a fixed distance (14 nt) from the 3' end of the crRNA. In vitro reconstitution shows Cmr1-2 and Cmr5 are not absolutely necessary for target cleavage. The protein is CRISPR system Cmr subunit Cmr5 of Pyrococcus furiosus (strain ATCC 43587 / DSM 3638 / JCM 8422 / Vc1).